A 546-amino-acid polypeptide reads, in one-letter code: Sodium/hydrogen exchanger 2 (546 aa).

At 1 to 21 the chain is on the cytoplasmic side; that stretch reads MTMFASLTSKMLSVSTSDHAS. A helical membrane pass occupies residues 22 to 42; that stretch reads VVSLNLFVALLCACIVIGHLL. Residues 43 to 47 lie on the Vacuolar side of the membrane; it reads EENRW. A helical transmembrane segment spans residues 48–68; sequence MNESITALLIGLGTGVVILLI. Residues 69 to 75 are Cytoplasmic-facing; that stretch reads SRGKNSH. The helical intramembrane region spans 76 to 96; it reads LLVFSEDLFFIYLLPPIIFNA. Topologically, residues 97–111 are cytoplasmic; the sequence is GFQVKKKQFFRNFVT. A helical transmembrane segment spans residues 112–132; that stretch reads IMAFGAIGTVVSCTIISLGAI. The Vacuolar portion of the chain corresponds to 133–148; it reads QFFKKLDIGTFDLGDF. 2 consecutive intramembrane regions (helical) follow at residues 149–168 and 174–194; these read LAIG…QVLN and LLYS…VVLF. The Vacuolar segment spans residues 195-218; it reads NAIQSFDLTHLNHEAAFQFLGNFF. Residues 219 to 239 traverse the membrane as a helical segment; it reads YLFLLSTGLGVATGLISAYVI. Residues 240 to 264 lie on the Cytoplasmic side of the membrane; that stretch reads KKLYFGRHSTDREVALMMLMAYLSY. Residues 265 to 285 traverse the membrane as a helical segment; sequence MLAELFALSGILTVFFCGIVM. The Vacuolar portion of the chain corresponds to 286-304; that stretch reads SHYTWHNVTESSRITTKHA. N-linked (GlcNAc...) asparagine glycosylation is present at asparagine 292. Residues 305-325 traverse the membrane as a helical segment; the sequence is FATLSFLAETFIFLYVGMDAL. At 326–344 the chain is on the cytoplasmic side; that stretch reads DIEKWRFVSDSPGTSVAVS. Residues 345 to 365 form a helical membrane-spanning segment; sequence SILMGLVMLGRAAFVFPLSFL. Residues 366–381 lie on the Vacuolar side of the membrane; the sequence is SNLAKKHQSEKISIKQ. The helical transmembrane segment at 382–402 threads the bilayer; it reads QVVIWWAGLMRGAVSMALAYN. The Cytoplasmic segment spans residues 403-415; that stretch reads KFTRSGHTELRGN. A helical transmembrane segment spans residues 416–436; that stretch reads AIMITSTITVCLFSTMVFGML. The Vacuolar segment spans residues 437–546; that stretch reads TKPLIRYLMP…ERSSHDLSKP (110 aa).

Belongs to the monovalent cation:proton antiporter 1 (CPA1) transporter (TC 2.A.36) family. Expressed in roots and shoots.

It localises to the vacuole membrane. It catalyses the reaction Na(+)(in) + H(+)(out) = Na(+)(out) + H(+)(in). The enzyme catalyses K(+)(in) + H(+)(out) = K(+)(out) + H(+)(in). Its function is as follows. Acts in low affinity electroneutral exchange of protons for cations such as Na(+) or K(+) across membranes. May also exchange Li(+) and Cs(+) with a lower affinity. Involved in vacuolar ion compartmentalization necessary for cell volume regulation and cytoplasmic Na(+) detoxification. The protein is Sodium/hydrogen exchanger 2 (NHX2) of Arabidopsis thaliana (Mouse-ear cress).